The chain runs to 418 residues: Putative competence-damage inducible protein (418 aa).

This sequence belongs to the CinA family.

The protein is Putative competence-damage inducible protein of Streptococcus pneumoniae (strain 70585).